We begin with the raw amino-acid sequence, 241 residues long: Polycomb group RING finger protein 3 (241 aa).

Residues 17–56 (CRLCSGYLIDATTVTECLHTFCRSCLVKYLEENNTCPTCR) form an RING-type zinc finger. The tract at residues 115–148 (AKQHLDPRNGETKADDNSNKETAEEKQEEDNDYH) is disordered. The span at 117-139 (QHLDPRNGETKADDNSNKETAEE) shows a compositional bias: basic and acidic residues. An interaction with BCORL1 region spans residues 131 to 241 (NSNKETAEEK…LHYRPKMDLL (111 aa)).

In terms of assembly, component of a PRC1-like complex that contains PCGF3, RNF2 and RYBP. Interacts with RNF2. Interacts with CBX6, CBX7 and CBX8. Interacts with BCORL1.

It is found in the nucleus. Its subcellular location is the nucleoplasm. Component of a Polycomb group (PcG) multiprotein PRC1-like complex, a complex class required to maintain the transcriptionally repressive state of many genes, including Hox genes, throughout development. PcG PRC1 complex acts via chromatin remodeling and modification of histones; it mediates monoubiquitination of histone H2A 'Lys-119', rendering chromatin heritably changed in its expressibility. Within the PRC1-like complex, regulates RNF2 ubiquitin ligase activity. Plays a redundant role with PCGF5 as part of a PRC1-like complex that mediates monoubiquitination of histone H2A 'Lys-119' on the X chromosome and is required for normal silencing of one copy of the X chromosome in XX females. This chain is Polycomb group RING finger protein 3 (PcgF3), found in Mus musculus (Mouse).